The chain runs to 330 residues: Cyclic AMP receptor-like protein E (330 aa).

Residues 1-10 (MLSLSSYVLN) lie on the Extracellular side of the membrane. A helical membrane pass occupies residues 11–31 (LVGSILCLIGCLFIIGHFFWI). Residues 32–40 (PLLRTSLSR) are Cytoplasmic-facing. A helical transmembrane segment spans residues 41-61 (IIIYPTFILLLYDMVSFPSFI). Residues 62 to 85 (SKTADLYIERSTIICNFQEAIIQY) lie on the Extracellular side of the membrane. The helical transmembrane segment at 86–106 (LILSNFIWSVCISVNLLYLCF) threads the bilayer. Residues 107 to 116 (SPNKNLKKNE) lie on the Cytoplasmic side of the membrane. The chain crosses the membrane as a helical span at residues 117–137 (LLYHLCSWGIPLIVVVITKIP). The Extracellular segment spans residues 138 to 156 (NMISDNGNQCRFKSPNYIK). A helical membrane pass occupies residues 157–177 (FYLETILFIAFMLFNFIVAFI). Residues 178-213 (TIKHIISGNLRESETTTTSVLFVNEKKITTKKIVWR) lie on the Cytoplasmic side of the membrane. The chain crosses the membrane as a helical span at residues 214 to 234 (LLLYPSILSICYIMTLVLSIY). Over 235 to 274 (QFSTESYGSGGAYANSINNKRNDKNTESGNSNNNNNSYIE) the chain is Extracellular. N269 carries an N-linked (GlcNAc...) asparagine glycan. Residues 275–295 (ILLYISKAIFLLQGFFNALVY) form a helical membrane-spanning segment. The Cytoplasmic segment spans residues 296 to 330 (LRSSKLRDRYKKITIFRKIFWRDEADYQSINDGFN).

The protein belongs to the G-protein coupled receptor 5 family.

It localises to the membrane. In terms of biological role, receptor for cAMP. This chain is Cyclic AMP receptor-like protein E (crlE), found in Dictyostelium discoideum (Social amoeba).